Consider the following 61-residue polypeptide: Large ribosomal subunit protein uL30 (61 aa).

This sequence belongs to the universal ribosomal protein uL30 family. Part of the 50S ribosomal subunit.

The chain is Large ribosomal subunit protein uL30 from Bifidobacterium adolescentis (strain ATCC 15703 / DSM 20083 / NCTC 11814 / E194a).